We begin with the raw amino-acid sequence, 555 residues long: Formate--tetrahydrofolate ligase (555 aa).

Residue 65–72 (TPAGEGKS) coordinates ATP.

This sequence belongs to the formate--tetrahydrofolate ligase family.

The enzyme catalyses (6S)-5,6,7,8-tetrahydrofolate + formate + ATP = (6R)-10-formyltetrahydrofolate + ADP + phosphate. Its pathway is one-carbon metabolism; tetrahydrofolate interconversion. The protein is Formate--tetrahydrofolate ligase of Staphylococcus aureus (strain COL).